The following is a 449-amino-acid chain: Phosphoglucosamine mutase (449 aa).

The active-site Phosphoserine intermediate is serine 101. Mg(2+) is bound by residues serine 101, aspartate 243, aspartate 245, and aspartate 247. Position 101 is a phosphoserine (serine 101).

The protein belongs to the phosphohexose mutase family. The cofactor is Mg(2+). Post-translationally, activated by phosphorylation.

The catalysed reaction is alpha-D-glucosamine 1-phosphate = D-glucosamine 6-phosphate. Catalyzes the conversion of glucosamine-6-phosphate to glucosamine-1-phosphate. This chain is Phosphoglucosamine mutase, found in Syntrophobacter fumaroxidans (strain DSM 10017 / MPOB).